Here is a 372-residue protein sequence, read N- to C-terminus: Queuine tRNA-ribosyltransferase (372 aa).

Asp90 (proton acceptor) is an active-site residue. Substrate-binding positions include 90-94 (DSGGF), Asp144, Gln193, and Gly220. The segment at 251–257 (GVGTPED) is RNA binding. Residue Asp270 is the Nucleophile of the active site. Positions 275–279 (TRNAR) are RNA binding; important for wobble base 34 recognition. 4 residues coordinate Zn(2+): Cys308, Cys310, Cys313, and His339.

It belongs to the queuine tRNA-ribosyltransferase family. In terms of assembly, homodimer. Within each dimer, one monomer is responsible for RNA recognition and catalysis, while the other monomer binds to the replacement base PreQ1. Zn(2+) is required as a cofactor.

It catalyses the reaction 7-aminomethyl-7-carbaguanine + guanosine(34) in tRNA = 7-aminomethyl-7-carbaguanosine(34) in tRNA + guanine. The protein operates within tRNA modification; tRNA-queuosine biosynthesis. Its function is as follows. Catalyzes the base-exchange of a guanine (G) residue with the queuine precursor 7-aminomethyl-7-deazaguanine (PreQ1) at position 34 (anticodon wobble position) in tRNAs with GU(N) anticodons (tRNA-Asp, -Asn, -His and -Tyr). Catalysis occurs through a double-displacement mechanism. The nucleophile active site attacks the C1' of nucleotide 34 to detach the guanine base from the RNA, forming a covalent enzyme-RNA intermediate. The proton acceptor active site deprotonates the incoming PreQ1, allowing a nucleophilic attack on the C1' of the ribose to form the product. After dissociation, two additional enzymatic reactions on the tRNA convert PreQ1 to queuine (Q), resulting in the hypermodified nucleoside queuosine (7-(((4,5-cis-dihydroxy-2-cyclopenten-1-yl)amino)methyl)-7-deazaguanosine). This chain is Queuine tRNA-ribosyltransferase, found in Campylobacter hominis (strain ATCC BAA-381 / DSM 21671 / CCUG 45161 / LMG 19568 / NCTC 13146 / CH001A).